The chain runs to 115 residues: Protein VCF2 (115 aa).

Basic residues predominate over residues 1–12 (MGGCPVRKRRRN). A disordered region spans residues 1–70 (MGGCPVRKRR…GPEGNLNQIV (70 aa)). Residues 33 to 44 (FQDSQDTEFSWS) show a composition bias toward polar residues.

The protein belongs to the VCF family.

This chain is Protein VCF2, found in Homo sapiens (Human).